We begin with the raw amino-acid sequence, 102 residues long: ATP-dependent Clp protease adapter protein ClpS (102 aa).

Belongs to the ClpS family. As to quaternary structure, binds to the N-terminal domain of the chaperone ClpA.

Its function is as follows. Involved in the modulation of the specificity of the ClpAP-mediated ATP-dependent protein degradation. This Desulfotalea psychrophila (strain LSv54 / DSM 12343) protein is ATP-dependent Clp protease adapter protein ClpS.